A 716-amino-acid polypeptide reads, in one-letter code: tRNA(Met) cytidine acetyltransferase TmcA (716 aa).

ATP is bound by residues Q192, 217–226 (GRGKSYVIGL), and R364. An N-acetyltransferase domain is found at 401-567 (REVLARDREV…KNVALAKPLD (167 aa)). Acetyl-CoA-binding positions include 493–495 (IAV) and 500–506 (QRRGLGS).

This sequence belongs to the RNA cytidine acetyltransferase family. TmcA subfamily.

The protein localises to the cytoplasm. It catalyses the reaction cytidine(34) in elongator tRNA(Met) + acetyl-CoA + ATP + H2O = N(4)-acetylcytidine(34) in elongator tRNA(Met) + ADP + phosphate + CoA + H(+). Catalyzes the formation of N(4)-acetylcytidine (ac(4)C) at the wobble position of tRNA(Met), by using acetyl-CoA as an acetyl donor and ATP (or GTP). This is tRNA(Met) cytidine acetyltransferase TmcA from Aeropyrum pernix (strain ATCC 700893 / DSM 11879 / JCM 9820 / NBRC 100138 / K1).